A 115-amino-acid chain; its full sequence is MARVKNGIVHVARRKRLLKKTKGFWGTKKSNYKKAKDTLRKGMMYATRDRKARKRDFRSLWIVRISAALTGMGITYSRFFEGLKKSNIKLNRKILSNLAIEDIETFKKIVYEIKN.

It belongs to the bacterial ribosomal protein bL20 family.

Functionally, binds directly to 23S ribosomal RNA and is necessary for the in vitro assembly process of the 50S ribosomal subunit. It is not involved in the protein synthesizing functions of that subunit. This chain is Large ribosomal subunit protein bL20, found in Borrelia hermsii (strain HS1 / DAH).